The chain runs to 1489 residues: DEAD-box ATP-dependent DNA helicase Fancm (1489 aa).

Residues 65–237 (IVQSALFKNT…AVCRNLYISN (173 aa)) enclose the Helicase ATP-binding domain. 78–85 (LPTGLGKT) provides a ligand contact to ATP. The short motif at 185–188 (DEAH) is the DEAH box element. One can recognise a Helicase C-terminal domain in the interval 418-584 (KLRQVLVQHF…VVKLSLYEQN (167 aa)). Disordered stretches follow at residues 591–647 (KFQP…ESQQ), 980–1000 (VEESQRSTPISIADSSGESNH), 1145–1182 (TETIKNSENKNSHEDGSRTVSPDIFGSDSMSPLKPQGK), 1196–1222 (VLPCPPPNSVGLNSPENRKRTNPSIQE), 1255–1293 (NPTISVPKDEEDSPIARRPSKRKIVISSDEEEEQKPQIA), and 1452–1489 (ERRKQRRLGKVPSAPVNKRRRLQTISTSSDEDDVVLID). Basic and acidic residues predominate over residues 594–610 (PKCEEKHMEPVAEEKPK). Basic residues predominate over residues 611-625 (PKSAAKTKESRKRKQ). The segment covering 985-998 (RSTPISIADSSGES) has biased composition (polar residues). A compositionally biased stretch (basic and acidic residues) spans 1149-1161 (KNSENKNSHEDGS). A compositionally biased stretch (acidic residues) spans 1480–1489 (SDEDDVVLID).

It belongs to the DEAD box helicase family. DEAH subfamily. FANCM sub-subfamily.

The protein resides in the nucleus. The catalysed reaction is ATP + H2O = ADP + phosphate + H(+). It catalyses the reaction Couples ATP hydrolysis with the unwinding of duplex DNA by translocating in the 3'-5' direction.. Its function is as follows. A ssDNA-dependent ATPase with 3' to 5' helicase activity. Involved in multiple DNA-damage responses, some that require ATPase and helicase activity and some that are independent of these. Involved in DNA interstrand cross-link repair, probably together with Fancl and other Fanconi anemia pathway homologs. Independent of Fancl involved in DNA double strand break repair, including contributing to the synthesis-dependent strand annealing (SDSA) pathway. Probably contributes to SDSA by unwinding short duplex regions in complex D-loop-like DNA structures. This is DEAD-box ATP-dependent DNA helicase Fancm from Drosophila melanogaster (Fruit fly).